A 331-amino-acid polypeptide reads, in one-letter code: HTH-type transcriptional regulator RipA (331 aa).

The region spanning 112-209 is the HTH araC/xylS-type domain; that stretch reads RAVAQVLVSN…GATPSTFTTG (98 aa). DNA-binding regions (H-T-H motif) lie at residues 129-150 and 176-199; these read EEFA…LKST and ISVV…RRHT.

In terms of biological role, under iron limitation, RipA negatively controls the expression of the acn (aconitase), catA (catechol 1,2 dioxygenase), leuCD (isopropylmalate dehydratase), narKGHJI (nitrite/nitrate transporter and nitrate reductase), sdhCAB (succinate dehydrogenase), pta (phosphotransacetylase) and katA (catalase) genes. Binds to the consensus sequence in the promoter region. This chain is HTH-type transcriptional regulator RipA, found in Corynebacterium glutamicum (strain ATCC 13032 / DSM 20300 / JCM 1318 / BCRC 11384 / CCUG 27702 / LMG 3730 / NBRC 12168 / NCIMB 10025 / NRRL B-2784 / 534).